A 190-amino-acid polypeptide reads, in one-letter code: uncharacterized protein (190 aa).

It to E.coli YdjR.

This is an uncharacterized protein from Pseudomonas putida (Arthrobacter siderocapsulatus).